Consider the following 69-residue polypeptide: Large ribosomal subunit protein uL29 (69 aa).

The protein belongs to the universal ribosomal protein uL29 family.

The polypeptide is Large ribosomal subunit protein uL29 (Rhodopseudomonas palustris (strain BisB5)).